The sequence spans 341 residues: S-adenosylmethionine:tRNA ribosyltransferase-isomerase (341 aa).

It belongs to the QueA family. Monomer.

It localises to the cytoplasm. The catalysed reaction is 7-aminomethyl-7-carbaguanosine(34) in tRNA + S-adenosyl-L-methionine = epoxyqueuosine(34) in tRNA + adenine + L-methionine + 2 H(+). Its pathway is tRNA modification; tRNA-queuosine biosynthesis. Functionally, transfers and isomerizes the ribose moiety from AdoMet to the 7-aminomethyl group of 7-deazaguanine (preQ1-tRNA) to give epoxyqueuosine (oQ-tRNA). In Chlorobium phaeobacteroides (strain DSM 266 / SMG 266 / 2430), this protein is S-adenosylmethionine:tRNA ribosyltransferase-isomerase.